Reading from the N-terminus, the 400-residue chain is Subtilisin-like protease 11 (400 aa).

Positions 1-19 (MGLFKVIFTAVAALSAVDA) are cleaved as a signal peptide. A propeptide spanning residues 20–117 (AELLSSAKSK…VEHDRHVYIS (98 aa)) is cleaved from the precursor. The Inhibitor I9 domain maps to 35-116 (SYLVVMKDSV…FVEHDRHVYI (82 aa)). Positions 127–400 (SWGLGRVSHR…NKLLYNRSGK (274 aa)) constitute a Peptidase S8 domain. A glycan (N-linked (GlcNAc...) asparagine) is linked at Asn-138. Asp-159 acts as the Charge relay system in catalysis. N-linked (GlcNAc...) asparagine glycosylation is present at Asn-181. The active-site Charge relay system is the His-191. Residues Asn-252 and Asn-337 are each glycosylated (N-linked (GlcNAc...) asparagine). Ser-346 serves as the catalytic Charge relay system. 2 N-linked (GlcNAc...) asparagine glycosylation sites follow: Asn-388 and Asn-396.

The protein belongs to the peptidase S8 family.

It is found in the secreted. Its function is as follows. Secreted subtilisin-like serine protease with keratinolytic activity that contributes to pathogenicity. The sequence is that of Subtilisin-like protease 11 (SUB11) from Trichophyton verrucosum (strain HKI 0517).